A 456-amino-acid polypeptide reads, in one-letter code: Gamma-glutamyl phosphate reductase (456 aa).

The protein belongs to the gamma-glutamyl phosphate reductase family.

It is found in the cytoplasm. It catalyses the reaction L-glutamate 5-semialdehyde + phosphate + NADP(+) = L-glutamyl 5-phosphate + NADPH + H(+). The protein operates within amino-acid biosynthesis; L-proline biosynthesis; L-glutamate 5-semialdehyde from L-glutamate: step 2/2. Functionally, catalyzes the NADPH-dependent reduction of L-glutamate 5-phosphate into L-glutamate 5-semialdehyde and phosphate. The product spontaneously undergoes cyclization to form 1-pyrroline-5-carboxylate. This chain is Gamma-glutamyl phosphate reductase, found in Haloquadratum walsbyi (strain DSM 16790 / HBSQ001).